Here is a 100-residue protein sequence, read N- to C-terminus: Cell division protein FtsB (100 aa).

The Cytoplasmic segment spans residues 1–3 (MKQ). The chain crosses the membrane as a helical span at residues 4-21 (LIFLLICLLSLLQYRLWL). Residues 22-100 (GDNNLSEYVL…ELRERNPFNR (79 aa)) are Periplasmic-facing. A coiled-coil region spans residues 49–73 (RNQILKEEIIDLKRGTEAIEERARN).

This sequence belongs to the FtsB family. Part of a complex composed of FtsB, FtsL and FtsQ.

The protein localises to the cell inner membrane. Essential cell division protein. May link together the upstream cell division proteins, which are predominantly cytoplasmic, with the downstream cell division proteins, which are predominantly periplasmic. The protein is Cell division protein FtsB of Shewanella frigidimarina (strain NCIMB 400).